The primary structure comprises 787 residues: Patatin-like phospholipase domain-containing protein OOU_Y34scaffold00095g16.3 (787 aa).

2 disordered regions span residues 47 to 69 (APDTTQPPDDGLASPRSPSARSF) and 137 to 164 (KVVGSQTHRQKKSSRRRKRSKAVAPGRR). Residues 59–69 (ASPRSPSARSF) are compositionally biased toward low complexity. The span at 144 to 157 (HRQKKSSRRRKRSK) shows a compositional bias: basic residues. A helical membrane pass occupies residues 180-200 (WPFLLIVGAWIVGLAVTYLFT). The region spanning 375-566 (LCLSGGASFA…RTDIPIRALN (192 aa)) is the PNPLA domain. The GXSXG motif lies at 406–410 (GTSGG). Catalysis depends on Ser408, which acts as the Nucleophile. Asp553 functions as the Proton acceptor in the catalytic mechanism. A disordered region spans residues 745 to 787 (GTDEEITTNDEMEFASDEKAVLTEDEGQFDGVTDNTEGSPLLK). Acidic residues predominate over residues 746–759 (TDEEITTNDEMEFA). Positions 777 to 787 (TDNTEGSPLLK) are enriched in polar residues.

Belongs to the PLPL family.

It localises to the membrane. Its function is as follows. Probable lipid hydrolase. This chain is Patatin-like phospholipase domain-containing protein OOU_Y34scaffold00095g16.3, found in Pyricularia oryzae (strain Y34) (Rice blast fungus).